A 227-amino-acid chain; its full sequence is tRNA (guanine-N(7)-)-methyltransferase (227 aa).

S-adenosyl-L-methionine contacts are provided by glutamate 60, glutamate 85, aspartate 112, and aspartate 135. Aspartate 135 is a catalytic residue. Residues lysine 139, aspartate 171, and 206–209 (TKFE) each bind substrate.

Belongs to the class I-like SAM-binding methyltransferase superfamily. TrmB family.

The catalysed reaction is guanosine(46) in tRNA + S-adenosyl-L-methionine = N(7)-methylguanosine(46) in tRNA + S-adenosyl-L-homocysteine. It functions in the pathway tRNA modification; N(7)-methylguanine-tRNA biosynthesis. Catalyzes the formation of N(7)-methylguanine at position 46 (m7G46) in tRNA. In Thiobacillus denitrificans (strain ATCC 25259 / T1), this protein is tRNA (guanine-N(7)-)-methyltransferase.